The primary structure comprises 199 residues: Probable molybdenum cofactor guanylyltransferase (199 aa).

Residues 8 to 10, lysine 20, aspartate 65, and aspartate 96 contribute to the GTP site; that span reads LAG. Aspartate 96 is a Mg(2+) binding site.

It belongs to the MobA family. It depends on Mg(2+) as a cofactor.

It localises to the cytoplasm. The enzyme catalyses Mo-molybdopterin + GTP + H(+) = Mo-molybdopterin guanine dinucleotide + diphosphate. Transfers a GMP moiety from GTP to Mo-molybdopterin (Mo-MPT) cofactor (Moco or molybdenum cofactor) to form Mo-molybdopterin guanine dinucleotide (Mo-MGD) cofactor. The sequence is that of Probable molybdenum cofactor guanylyltransferase from Bacillus subtilis (strain 168).